The chain runs to 723 residues: 1,3-alpha-isomaltosidase (723 aa).

Catalysis depends on Asp451, which acts as the Nucleophile. Glu454 is an active-site residue. Catalysis depends on Asp516, which acts as the Proton donor. His581 provides a ligand contact to substrate.

This sequence belongs to the glycosyl hydrolase 31 family.

It localises to the cytoplasm. The enzyme catalyses cyclobis-(1-&gt;3)-alpha-D-isomaltosyl + 2 H2O = 2 isomaltose. In terms of biological role, involved in the intracellular degradation of the cyclic tetrasaccharide cyclobis-(1-6)-alpha-nigerosyl (CNN) formed extracellularly from starch. Catalyzes the hydrolysis of the alpha-1,3-glucosidic linkage of cyclobis-(1-6)-alpha-nigerosyl (CNN) to yield isomaltose via a possible linear tetrasaccharide. It has a strong preference for the alpha-(1-3)-isomaltosyl moiety. The protein is 1,3-alpha-isomaltosidase of Kribbella flavida (strain DSM 17836 / JCM 10339 / NBRC 14399).